A 522-amino-acid chain; its full sequence is Glucans biosynthesis protein G (522 aa).

The first 33 residues, 1 to 33 (MLDNKFGFKQRVASLRWLSAAIMLSVSAVPAWA), serve as a signal peptide directing secretion.

It belongs to the OpgD/OpgG family.

It localises to the periplasm. The protein operates within glycan metabolism; osmoregulated periplasmic glucan (OPG) biosynthesis. Functionally, involved in the biosynthesis of osmoregulated periplasmic glucans (OPGs). This is Glucans biosynthesis protein G from Pectobacterium carotovorum subsp. carotovorum (strain PC1).